We begin with the raw amino-acid sequence, 345 residues long: Uroporphyrinogen decarboxylase (345 aa).

Residues 28–32 (RQAGR), aspartate 77, tyrosine 152, serine 207, and histidine 321 contribute to the substrate site.

It belongs to the uroporphyrinogen decarboxylase family. In terms of assembly, homodimer.

Its subcellular location is the cytoplasm. The catalysed reaction is uroporphyrinogen III + 4 H(+) = coproporphyrinogen III + 4 CO2. Its pathway is porphyrin-containing compound metabolism; protoporphyrin-IX biosynthesis; coproporphyrinogen-III from 5-aminolevulinate: step 4/4. Catalyzes the decarboxylation of four acetate groups of uroporphyrinogen-III to yield coproporphyrinogen-III. The protein is Uroporphyrinogen decarboxylase of Arthrobacter sp. (strain FB24).